A 542-amino-acid polypeptide reads, in one-letter code: Valine N-monooxygenase 1 (542 aa).

At 1-21 (MAMNVSTTIGLLNATSFASSS) the chain is on the cytoplasmic side. A helical; Signal-anchor for type II membrane protein transmembrane segment spans residues 22-42 (SINTVKILFVTLFISIVSTIV). The Lumenal portion of the chain corresponds to 43-542 (KLQKSAANKE…LAPHLYPTSP (500 aa)). Residue N278 is glycosylated (N-linked (GlcNAc...) asparagine). C478 is a binding site for heme. An N-linked (GlcNAc...) asparagine glycan is attached at N506.

Belongs to the cytochrome P450 family. Requires heme as cofactor. As to expression, expressed in the epidermis, the next two cortex cell layers, the endodermis and the pericycle of leaf petioles. Strong expression around the laticifers among the phloem cells and in parenchymatic cells between the protoxylem and the metaxylem cells. In the leaves, preferentially expressed in the mesophyll cells adjacent to the epidermis.

The protein resides in the microsome membrane. The catalysed reaction is L-valine + 2 reduced [NADPH--hemoprotein reductase] + 2 O2 = (E)-2-methylpropanal oxime + 2 oxidized [NADPH--hemoprotein reductase] + CO2 + 3 H2O + 2 H(+). It catalyses the reaction L-valine + reduced [NADPH--hemoprotein reductase] + O2 = N-hydroxy-L-valine + oxidized [NADPH--hemoprotein reductase] + H2O + 2 H(+). The enzyme catalyses N-hydroxy-L-valine + reduced [NADPH--hemoprotein reductase] + O2 = N,N-dihydroxy-L-valine + oxidized [NADPH--hemoprotein reductase] + H2O + H(+). It carries out the reaction L-isoleucine + 2 reduced [NADPH--hemoprotein reductase] + 2 O2 = (1E,2S)-2-methylbutanal oxime + 2 oxidized [NADPH--hemoprotein reductase] + CO2 + 3 H2O + 2 H(+). The catalysed reaction is L-isoleucine + reduced [NADPH--hemoprotein reductase] + O2 = N-hydroxy-L-isoleucine + oxidized [NADPH--hemoprotein reductase] + H2O + 2 H(+). It catalyses the reaction N-hydroxy-L-isoleucine + reduced [NADPH--hemoprotein reductase] + O2 = N,N-dihydroxy-L-isoleucine + oxidized [NADPH--hemoprotein reductase] + H2O + H(+). It functions in the pathway secondary metabolite biosynthesis. With respect to regulation, inhibited by tetcyclasis but not by 1-aminobenzotriazole (ABT). Its function is as follows. Involved in the biosynthesis of the cyanogenic glucosides linamarin and lotaustralin. Can use L-valine or L-isoleucine as substrate, but not L-leucine, L-phenylalanine, L-tyrosine, D-valine or D-isoleucine. Catalyzes multi-step reactions starting with two successive N-hydroxylations using L-valine and L-isoleucine as substrates leading to the formation of N,N-dihydroxy-L-valine and N,N-dihydroxy-L-isoleucine, respectively; following spontaneous reactions lead to the production of (E)-2-methylpropanal oxime and (1E,2S)-2-methylbutanal oxime, respectively. The sequence is that of Valine N-monooxygenase 1 from Manihot esculenta (Cassava).